We begin with the raw amino-acid sequence, 797 residues long: Mitochondrial inner membrane m-AAA protease component AFG3L2 (797 aa).

The transit peptide at 1–38 directs the protein to the mitochondrion; the sequence is MAHRCLRLWGRGGCWPRGLQQLLVPGGVGPGEQPCLRT. Positions 39-66 are cleaved as a propeptide — removed in mature form; that stretch reads LYRFVTTQARASRNSLLTDIIAAYQRFC. The Mitochondrial matrix portion of the chain corresponds to 39-142; that stretch reads LYRFVTTQAR…KGDIPWDDKD (104 aa). The tract at residues 76-126 is disordered; the sequence is YFPNGKNGKKASEPKEVMGEKKESKPAATTRSSGGGGGGGGKRGGKKDDSH. The span at 85 to 100 shows a compositional bias: basic and acidic residues; sequence KASEPKEVMGEKKESK. Residues 108–117 are compositionally biased toward gly residues; the sequence is SGGGGGGGGK. Lys-117 is modified (N6-succinyllysine). A helical membrane pass occupies residues 143 to 163; that stretch reads FRMFFLWTALFWGGVMFYLLL. At 164 to 250 the chain is on the mitochondrial intermembrane side; the sequence is KRSGREITWK…VPVVYIAESD (87 aa). A helical transmembrane segment spans residues 251–271; the sequence is GSFLLSMLPTVLIIAFLLYTI. At 272-797 the chain is on the mitochondrial matrix side; sequence RRGPAGIGRT…EEPPGEKVAN (526 aa). Residues Val-310, Ala-311, Thr-352, Gly-353, Lys-354, Thr-355, Leu-356, and His-490 each coordinate ATP. His-574 serves as a coordination point for Zn(2+). The active site involves Glu-575. 2 residues coordinate Zn(2+): His-578 and Asp-649. Positions 759 to 797 are disordered; it reads FVEGTGSLDEDTSLPEGLKDWNKEREKEKEEPPGEKVAN. The span at 775 to 797 shows a compositional bias: basic and acidic residues; sequence GLKDWNKEREKEKEEPPGEKVAN.

The protein in the N-terminal section; belongs to the AAA ATPase family. This sequence in the C-terminal section; belongs to the peptidase M41 family. Homohexamer. Forms heterohexamers with SPG7. The m-AAA protease is either composed of homohexamers of AFG3L2 or heterohexamers of AFG3L2 and SPG7. Interacts with MAIP1. Interacts with DNAJC19. Interacts with PHB2. Requires Zn(2+) as cofactor. Post-translationally, upon import into the mitochondrion, the N-terminal transit peptide is cleaved to generate an intermediate form which undergoes autocatalytic proteolytic processing to generate the proteolytically active mature form. In terms of tissue distribution, ubiquitous. Highly expressed in the cerebellar Purkinje cells.

Its subcellular location is the mitochondrion inner membrane. It carries out the reaction ATP + H2O = ADP + phosphate + H(+). Functionally, catalytic component of the m-AAA protease, a protease that plays a key role in proteostasis of inner mitochondrial membrane proteins, and which is essential for axonal and neuron development. AFG3L2 possesses both ATPase and protease activities: the ATPase activity is required to unfold substrates, threading them into the internal proteolytic cavity for hydrolysis into small peptide fragments. The m-AAA protease carries out quality control in the inner membrane of the mitochondria by mediating degradation of mistranslated or misfolded polypeptides. The m-AAA protease complex also promotes the processing and maturation of mitochondrial proteins, such as MRPL32/bL32m, PINK1 and SP7. Mediates protein maturation of the mitochondrial ribosomal subunit MRPL32/bL32m by catalyzing the cleavage of the presequence of MRPL32/bL32m prior to assembly into the mitochondrial ribosome. Required for SPG7 maturation into its active mature form after SPG7 cleavage by mitochondrial-processing peptidase (MPP). Required for the maturation of PINK1 into its 52kDa mature form after its cleavage by mitochondrial-processing peptidase (MPP). Acts as a regulator of calcium in neurons by mediating degradation of SMDT1/EMRE before its assembly with the uniporter complex, limiting the availability of SMDT1/EMRE for MCU assembly and promoting efficient assembly of gatekeeper subunits with MCU. Promotes the proteolytic degradation of GHITM upon hyperpolarization of mitochondria: progressive GHITM degradation leads to respiratory complex I degradation and broad reshaping of the mitochondrial proteome by AFG3L2. Also acts as a regulator of mitochondrial glutathione homeostasis by mediating cleavage and degradation of SLC25A39. SLC25A39 cleavage is prevented when SLC25A39 binds iron-sulfur. Involved in the regulation of OMA1-dependent processing of OPA1. May act by mediating processing of OMA1 precursor, participating in OMA1 maturation. In Homo sapiens (Human), this protein is Mitochondrial inner membrane m-AAA protease component AFG3L2.